Reading from the N-terminus, the 503-residue chain is Probable voltage-gated potassium channel subunit kvs-4 (503 aa).

Over 1–231 (MNSAIMQGAA…EPASSGKAQA (231 aa)) the chain is Cytoplasmic. The short motif at 217–219 (WNI) is the Required for dendritic localization element. Residues 232–252 (FAVCSVVFVLISISGLVLGSL) traverse the membrane as a helical segment. Residues 253–275 (PELQVATKQRNNLTGEEFTEMEP) are Extracellular-facing. N-linked (GlcNAc...) asparagine glycosylation is present at N264. The chain crosses the membrane as a helical span at residues 276–296 (MPILGYIEYVCIVWFTMEYGL). Residues 297-313 (KMLVSAERSKTFRQLLN) are Cytoplasmic-facing. Residues 314 to 334 (IIDLLAILPFIIEMLLLIFGI) form a helical membrane-spanning segment. The Extracellular segment spans residues 335-346 (STEQLRDLKGAF). A helical; Voltage-sensor membrane pass occupies residues 347–366 (LVIRILRVLRVIRVLKLGRY). Residues 367–383 (SSGLQMFGKTLKASFRQ) are Cytoplasmic-facing. An S4-S5 linker region spans residues 368–383 (SGLQMFGKTLKASFRQ). The helical transmembrane segment at 384–404 (LGMMAMVVMTGVIFFSTLVYF) threads the bilayer. Residues 405–417 (LEKDEPASKFHSI) lie on the Extracellular side of the membrane. Residues 418 to 429 (PAACWWCIVTMT) constitute an intramembrane region (helical). The stretch at 430–434 (TVGYG) is an intramembrane region. The Selectivity filter motif lies at 430–435 (TVGYGD). Topologically, residues 435–445 (DLTPVTVPGKL) are extracellular. A helical transmembrane segment spans residues 446–466 (VATGAIACGVLVLALPITIIV). Residues 467–503 (DNFMKVAETERPAGGNRYRTSQYPKATKSEQMILKVT) lie on the Cytoplasmic side of the membrane. The Required for dendritic localization signature appears at 496–500 (EQMIL).

Belongs to the potassium channel family. B (Shab) (TC 1.A.1.2) subfamily. Kv2.2/KCNB2 sub-subfamily. Homotetramer or heterotetramer. Interacts with unc-101 (via N-terminus); which targets kvs-4 to dendrites. Expressed in the cholinergic motor neuron DA9, mechanosensory neurons ALM and PLM, and the interneuron PVPL.

The protein localises to the cell membrane. The protein resides in the perikaryon. Its subcellular location is the cell projection. It is found in the axon. It localises to the dendrite. In terms of biological role, voltage-gated potassium channel that mediates transmembrane potassium transport in excitable membranes. The chain is Probable voltage-gated potassium channel subunit kvs-4 from Caenorhabditis elegans.